Consider the following 194-residue polypeptide: Outer-membrane lipoprotein LolB (194 aa).

The first 18 residues, 1–18 (MTLLLRLFTLGCLLLLAG), serve as a signal peptide directing secretion. Residue cysteine 19 is the site of N-palmitoyl cysteine attachment. Cysteine 19 is lipidated: S-diacylglycerol cysteine.

This sequence belongs to the LolB family. As to quaternary structure, monomer.

It is found in the cell outer membrane. Functionally, plays a critical role in the incorporation of lipoproteins in the outer membrane after they are released by the LolA protein. In Aeromonas hydrophila subsp. hydrophila (strain ATCC 7966 / DSM 30187 / BCRC 13018 / CCUG 14551 / JCM 1027 / KCTC 2358 / NCIMB 9240 / NCTC 8049), this protein is Outer-membrane lipoprotein LolB.